A 1465-amino-acid polypeptide reads, in one-letter code: Myomesin-2 (1465 aa).

The interval 38–61 (ASTQASSQKSLSQRSSSQRASSQT) is disordered. Low complexity predominate over residues 41–61 (QASSQKSLSQRSSSQRASSQT). Ig-like C2-type domains are found at residues 154–245 (PEIL…AAVV) and 266–371 (PLSS…AFLF). 5 consecutive Fibronectin type-III domains span residues 385-480 (APMD…ALDP), 513-608 (PPTG…AQDV), 614-707 (APGR…VQAA), 710-812 (VPSH…TMPE), and 815-912 (PAYD…ARPG). Ig-like C2-type domains lie at 904–1002 (PVLV…EELE), 1130–1211 (PHFA…QDVS), and 1345–1434 (RLIG…VTVS). The tract at residues 1442–1465 (IPDMAPPQQAKPKLIPASASAAGQ) is disordered.

As to quaternary structure, interacts with TTN/titin.

Its subcellular location is the cytoplasm. It localises to the myofibril. The protein resides in the sarcomere. The protein localises to the m line. Functionally, major component of the vertebrate myofibrillar M band. Binds myosin, titin, and light meromyosin. This binding is dose dependent. This is Myomesin-2 (MYOM2) from Homo sapiens (Human).